We begin with the raw amino-acid sequence, 666 residues long: MCLRRKLANAIRALSIDAVQEAQSGHPGMPMGMADIAEVLWREFFKHNPKNPLWNNRDRFILSNGHGSMLLYSILHLTGYKLSIDDLKKFRQLGSNTPGHPEIGSTPGVEMTTGPLGQGLGAAVGMAIAERTLASTFNKPNYDIVDHYTWVFVGDGCLMEGISHEVCSLAGTFGLGKLIVFYDSNGISIDGKVEEWFTDDTENRFKAYNWHVVSNVDGHDYRSISSAIKDAILVKNKPSLIICKTIIGYGSPNKSGLETSHGAPLGENEVLLTKQKLGWTYPPFVIPQDVYDHWNFNLQGVILENEWNKKFQGYYNKYPDLANEYLRRISKNVPDKFVDNFNKFIKELYLCPKNIATRVASQNVLEFLGKSLPELIGGSADLAPSNLTMWSKSKSIKQDISGNYVHYGVREFGMTAISNGIAHYGGFIPYVATFLAFMDYARSAVRMSALMKTQNIFIYSHDSIGLGEDGPTHQPIEQLSALRFIPNVNVWRPCDQLETAIAWKNAIERKDGPTALILSRQILCQIDRSQEQINDIYRGGYIVNTTVRSPKVIIVATGSEVKIALDVSNILFKKGILVRVVSMPSTNVFDQQDNDYKEFIFPRCLVHRVAIEAGISDFWYKYVGLTGCIIGIDTFGESGSSDQLFSKFGFNSDIISEKIISYLKSS.

His26 is a substrate binding site. Residues His66 and Gly114–Leu116 contribute to the thiamine diphosphate site. Asp155 contributes to the Mg(2+) binding site. Positions 156 and 185 each coordinate thiamine diphosphate. Mg(2+)-binding residues include Asn185 and Ile187. The substrate site is built by His261, Arg358, and Ser385. His261 is a thiamine diphosphate binding site. Glu411 acts as the Proton donor in catalysis. A thiamine diphosphate-binding site is contributed by Phe437. Positions 461, 469, and 520 each coordinate substrate.

This sequence belongs to the transketolase family. Homodimer. Requires Mg(2+) as cofactor. It depends on Ca(2+) as a cofactor. Mn(2+) serves as cofactor. Co(2+) is required as a cofactor. The cofactor is thiamine diphosphate.

It catalyses the reaction D-sedoheptulose 7-phosphate + D-glyceraldehyde 3-phosphate = aldehydo-D-ribose 5-phosphate + D-xylulose 5-phosphate. Its function is as follows. Catalyzes the transfer of a two-carbon ketol group from a ketose donor to an aldose acceptor, via a covalent intermediate with the cofactor thiamine pyrophosphate. The polypeptide is Transketolase (tkt) (Buchnera aphidicola subsp. Baizongia pistaciae (strain Bp)).